The following is a 452-amino-acid chain: Isocitrate dehydrogenase [NADP], mitochondrial (452 aa).

Residues 1 to 39 constitute a mitochondrion transit peptide; that stretch reads MAGYLRVVRSLCRASGSGSAWAPAALTAPNLQEQPRRHY. N6-acetyllysine is present on residues K45, K48, K67, and K69. N6-acetyllysine; alternate occurs at positions 80 and 106. N6-succinyllysine; alternate is present on residues K80 and K106. NADP(+)-binding positions include 115-117 and R122; that span reads TIT. T117 contacts D-threo-isocitrate. D-threo-isocitrate contacts are provided by residues 134-140 and R149; that span reads SPNGTIR. At K155 the chain carries N6-acetyllysine. The residue at position 166 (K166) is an N6-acetyllysine; alternate. K166 bears the N6-succinyllysine; alternate mark. Position 172 (R172) interacts with D-threo-isocitrate. N6-acetyllysine; alternate occurs at positions 180 and 193. N6-succinyllysine; alternate is present on residues K180 and K193. Position 199 is an N6-acetyllysine (K199). The residue at position 256 (K256) is an N6-acetyllysine; alternate. Residue K256 is modified to N6-succinyllysine; alternate. N6-acetyllysine is present on residues K263, K272, K275, and K280. Residue K282 is modified to N6-acetyllysine; alternate. K282 is modified (N6-succinyllysine; alternate). D291 is a binding site for Mn(2+). NADP(+) is bound at residue K299. D314 is a Mn(2+) binding site. NADP(+) contacts are provided by residues 349 to 354 and N367; that span reads GTVTRH. K384 carries the N6-acetyllysine; alternate modification. K384 carries the post-translational modification N6-succinyllysine; alternate. Residues K400, K413, and K442 each carry the N6-acetyllysine modification.

This sequence belongs to the isocitrate and isopropylmalate dehydrogenases family. As to quaternary structure, homodimer. Mg(2+) is required as a cofactor. It depends on Mn(2+) as a cofactor. In terms of processing, acetylation at Lys-413 dramatically reduces catalytic activity. Deacetylated by SIRT3.

It is found in the mitochondrion. It catalyses the reaction D-threo-isocitrate + NADP(+) = 2-oxoglutarate + CO2 + NADPH. Its function is as follows. Plays a role in intermediary metabolism and energy production. It may tightly associate or interact with the pyruvate dehydrogenase complex. This Bos taurus (Bovine) protein is Isocitrate dehydrogenase [NADP], mitochondrial (IDH2).